Consider the following 366-residue polypeptide: tRNA/tmRNA (uracil-C(5))-methyltransferase (366 aa).

S-adenosyl-L-methionine-binding residues include Gln-190, Tyr-218, Asn-223, Glu-239, and Asp-299. Cys-324 (nucleophile) is an active-site residue. Residue Glu-358 is the Proton acceptor of the active site.

It belongs to the class I-like SAM-binding methyltransferase superfamily. RNA M5U methyltransferase family. TrmA subfamily.

It catalyses the reaction uridine(54) in tRNA + S-adenosyl-L-methionine = 5-methyluridine(54) in tRNA + S-adenosyl-L-homocysteine + H(+). The catalysed reaction is uridine(341) in tmRNA + S-adenosyl-L-methionine = 5-methyluridine(341) in tmRNA + S-adenosyl-L-homocysteine + H(+). Functionally, dual-specificity methyltransferase that catalyzes the formation of 5-methyluridine at position 54 (m5U54) in all tRNAs, and that of position 341 (m5U341) in tmRNA (transfer-mRNA). The polypeptide is tRNA/tmRNA (uracil-C(5))-methyltransferase (Edwardsiella ictaluri (strain 93-146)).